We begin with the raw amino-acid sequence, 356 residues long: uncharacterized protein (356 aa).

A helical transmembrane segment spans residues 8–28 (ILGFVLFVLGAAIFLTEVMHS).

The protein to C.elegans C41C4.1 and C18B2.1.

It localises to the membrane. This is an uncharacterized protein from Caenorhabditis elegans.